We begin with the raw amino-acid sequence, 174 residues long: Eukaryotic translation elongation factor 1 epsilon-1 (174 aa).

A2 carries the post-translational modification N-acetylalanine. Residues 2-56 are N-terminal; that stretch reads AAAAELKLLEKSLGLRPGNKYSAQGERQIPVLQTNNGPSLTGLATIATHLVKQAS. A GST C-terminal domain is found at 50–173; the sequence is HLVKQASKEH…FIKNRLYANS (124 aa). The interval 57–63 is linker; the sequence is KEHLLGS. The C-terminal stretch occupies residues 64–152; that stretch reads TAEEKALVQQ…SRWFCHIQHY (89 aa). K138 bears the N6-acetyllysine mark. The stretch at 153–169 forms a coiled coil; that stretch reads PDIRQHLSSVVFIKNRL.

As to quaternary structure, part of a multisubunit complex that groups tRNA ligases for Arg (RARS1), Asp (DARS1), Gln (QARS1), Ile (IARS1), Leu (LARS1), Lys (KARS1), Met (MARS1) the bifunctional ligase for Glu and Pro (EPRS1) and the auxiliary subunits AIMP1/p43, AIMP2/p38 and EEF1E1/p18. Can interact simultaneously with MARS1 and EPRS1. Forms a linear complex that contains MARS1, EEF1E1, EPRS1 and AIMP2 that is at the core of the multisubunit complex. Interacts with ATM and ATR. The interaction with ATM, which takes place independently of TP53, is induced by DNA damage that may occur during genotoxic stress or cell growth. The interaction with ATR is enhanced by UV irradiation.

The protein localises to the cytoplasm. The protein resides in the nucleus. In terms of biological role, positive modulator of ATM response to DNA damage. The protein is Eukaryotic translation elongation factor 1 epsilon-1 (EEF1E1) of Cricetulus griseus (Chinese hamster).